The primary structure comprises 414 residues: DNA primase small subunit PriS (414 aa).

Active-site residues include aspartate 98, aspartate 100, and aspartate 312.

It belongs to the eukaryotic-type primase small subunit family. Heterodimer of a small subunit (PriS) and a large subunit (PriL). Mg(2+) serves as cofactor. Mn(2+) is required as a cofactor.

Functionally, catalytic subunit of DNA primase, an RNA polymerase that catalyzes the synthesis of short RNA molecules used as primers for DNA polymerase during DNA replication. The small subunit contains the primase catalytic core and has DNA synthesis activity on its own. Binding to the large subunit stabilizes and modulates the activity, increasing the rate of DNA synthesis while decreasing the length of the DNA fragments, and conferring RNA synthesis capability. The DNA polymerase activity may enable DNA primase to also catalyze primer extension after primer synthesis. May also play a role in DNA repair. This Methanosarcina acetivorans (strain ATCC 35395 / DSM 2834 / JCM 12185 / C2A) protein is DNA primase small subunit PriS.